Reading from the N-terminus, the 363-residue chain is Chorismate synthase (363 aa).

The NADP(+) site is built by Arg48 and Arg54. FMN-binding positions include 125-127 (RSS), 237-238 (NA), Gly277, 292-296 (KPTSS), and Arg318.

It belongs to the chorismate synthase family. Homotetramer. Requires FMNH2 as cofactor.

The catalysed reaction is 5-O-(1-carboxyvinyl)-3-phosphoshikimate = chorismate + phosphate. Its pathway is metabolic intermediate biosynthesis; chorismate biosynthesis; chorismate from D-erythrose 4-phosphate and phosphoenolpyruvate: step 7/7. Functionally, catalyzes the anti-1,4-elimination of the C-3 phosphate and the C-6 proR hydrogen from 5-enolpyruvylshikimate-3-phosphate (EPSP) to yield chorismate, which is the branch point compound that serves as the starting substrate for the three terminal pathways of aromatic amino acid biosynthesis. This reaction introduces a second double bond into the aromatic ring system. The chain is Chorismate synthase from Pseudomonas putida (strain GB-1).